Reading from the N-terminus, the 395-residue chain is Xylose isomerase (395 aa).

Residues histidine 54 and aspartate 57 contribute to the active site. Mg(2+) is bound by residues glutamate 181, glutamate 217, histidine 220, aspartate 245, aspartate 255, aspartate 257, and aspartate 293.

Belongs to the xylose isomerase family. In terms of assembly, homotetramer. The cofactor is Mg(2+).

The protein localises to the cytoplasm. The enzyme catalyses alpha-D-xylose = alpha-D-xylulofuranose. The polypeptide is Xylose isomerase (Arthrobacter sp. (strain FB24)).